The chain runs to 307 residues: Elongation factor Ts (307 aa).

The segment at 80-83 (TDFV) is involved in Mg(2+) ion dislocation from EF-Tu.

This sequence belongs to the EF-Ts family.

Its subcellular location is the cytoplasm. Associates with the EF-Tu.GDP complex and induces the exchange of GDP to GTP. It remains bound to the aminoacyl-tRNA.EF-Tu.GTP complex up to the GTP hydrolysis stage on the ribosome. This is Elongation factor Ts from Clostridium botulinum (strain Loch Maree / Type A3).